The primary structure comprises 449 residues: UDP-N-acetylmuramoylalanine--D-glutamate ligase (449 aa).

118-124 (GTNGKTT) is an ATP binding site.

This sequence belongs to the MurCDEF family.

It is found in the cytoplasm. It carries out the reaction UDP-N-acetyl-alpha-D-muramoyl-L-alanine + D-glutamate + ATP = UDP-N-acetyl-alpha-D-muramoyl-L-alanyl-D-glutamate + ADP + phosphate + H(+). It participates in cell wall biogenesis; peptidoglycan biosynthesis. In terms of biological role, cell wall formation. Catalyzes the addition of glutamate to the nucleotide precursor UDP-N-acetylmuramoyl-L-alanine (UMA). The chain is UDP-N-acetylmuramoylalanine--D-glutamate ligase from Staphylococcus epidermidis (strain ATCC 12228 / FDA PCI 1200).